Consider the following 279-residue polypeptide: NAD kinase (279 aa).

The active-site Proton acceptor is Asp-57. NAD(+) contacts are provided by residues 57-58 (DG), 133-134 (NE), Arg-159, Asp-161, and 172-177 (TAYNKS).

The protein belongs to the NAD kinase family. Requires a divalent metal cation as cofactor.

The protein localises to the cytoplasm. The catalysed reaction is NAD(+) + ATP = ADP + NADP(+) + H(+). Involved in the regulation of the intracellular balance of NAD and NADP, and is a key enzyme in the biosynthesis of NADP. Catalyzes specifically the phosphorylation on 2'-hydroxyl of the adenosine moiety of NAD to yield NADP. This chain is NAD kinase, found in Streptococcus pyogenes serotype M28 (strain MGAS6180).